The sequence spans 218 residues: uncharacterized protein (218 aa).

Transmembrane regions (helical) follow at residues 28 to 48 (ILLF…LSGL), 66 to 86 (FDIG…WKPL), 92 to 112 (LGTL…TKIL), 122 to 142 (MIFC…YLTC), and 173 to 193 (ISVC…TVLF).

The protein localises to the cell membrane. This is an uncharacterized protein from Haemophilus influenzae (strain ATCC 51907 / DSM 11121 / KW20 / Rd).